We begin with the raw amino-acid sequence, 240 residues long: Ubiquinone biosynthesis O-methyltransferase (240 aa).

S-adenosyl-L-methionine is bound by residues R44, G64, D85, and M129.

The protein belongs to the methyltransferase superfamily. UbiG/COQ3 family.

It catalyses the reaction a 3-demethylubiquinol + S-adenosyl-L-methionine = a ubiquinol + S-adenosyl-L-homocysteine + H(+). The enzyme catalyses a 3-(all-trans-polyprenyl)benzene-1,2-diol + S-adenosyl-L-methionine = a 2-methoxy-6-(all-trans-polyprenyl)phenol + S-adenosyl-L-homocysteine + H(+). The protein operates within cofactor biosynthesis; ubiquinone biosynthesis. Functionally, O-methyltransferase that catalyzes the 2 O-methylation steps in the ubiquinone biosynthetic pathway. The protein is Ubiquinone biosynthesis O-methyltransferase of Escherichia coli O6:K15:H31 (strain 536 / UPEC).